A 202-amino-acid polypeptide reads, in one-letter code: Small ribosomal subunit protein uS4 (202 aa).

Residues 22 to 43 are disordered; sequence TRKSARRAYPPGQHGQNRKKRS. The region spanning 90 to 152 is the S4 RNA-binding domain; sequence MRLDNTVFRL…APSRKLVENN (63 aa).

Belongs to the universal ribosomal protein uS4 family. Part of the 30S ribosomal subunit. Contacts protein S5. The interaction surface between S4 and S5 is involved in control of translational fidelity.

In terms of biological role, one of the primary rRNA binding proteins, it binds directly to 16S rRNA where it nucleates assembly of the body of the 30S subunit. With S5 and S12 plays an important role in translational accuracy. The protein is Small ribosomal subunit protein uS4 of Trichormus variabilis (strain ATCC 29413 / PCC 7937) (Anabaena variabilis).